Reading from the N-terminus, the 296-residue chain is MLENLATEERNEKTIDLDTLSPKEILAVMNEEDLTVPIAIKKVLPQIELIVSGVISCFQKGGRLIYLGAGTSGRLGVLDAAECVPTFGVSKEQVIGLIAGGEKAFVAAIEGAEDSKILGENDLKQIKLTANDFVIGIAASGRTPYVIGALDYAKSVGAKTGAISCNANAKISAHADIAVEVVTGAEILTGSTRLKAGTAQKLVLNMISTASMVGIGKVYKNLMVDVLPTNKKLEERSKRIIMEATEADYETANKFYEAAEKHVKVAIVMILTNSTKEIALEKLSEAKGFVRNTIQK.

The SIS domain maps to valine 54 to lysine 217. The active-site Proton donor is glutamate 82. The active site involves glutamate 113.

This sequence belongs to the GCKR-like family. MurNAc-6-P etherase subfamily. Homodimer.

It catalyses the reaction N-acetyl-D-muramate 6-phosphate + H2O = N-acetyl-D-glucosamine 6-phosphate + (R)-lactate. The protein operates within amino-sugar metabolism; N-acetylmuramate degradation. Its function is as follows. Specifically catalyzes the cleavage of the D-lactyl ether substituent of MurNAc 6-phosphate, producing GlcNAc 6-phosphate and D-lactate. In Listeria monocytogenes serotype 4b (strain CLIP80459), this protein is N-acetylmuramic acid 6-phosphate etherase.